Reading from the N-terminus, the 934-residue chain is MPRRAASPTPSENEVDIAGALFNNDSDFEDNSSKHHTKKGAVTNSGLDLDFNDLLGNGDDGLPSFNGEGDDDEAFIASLTRSSQRKSSNIQGKSVKKGGGFQAMGLNAHLLRAITRKGFSVPTPIQRKAIPLILERKDVVGMARTGSGKTAAFVIPMIERLKGHSPRVGSRALIMSPSRELALQTLKVVKELGRGTDLKTVLLVGGDSLEEQFGMMASNPDIIIATPGRFLHLKVEMNLSLASIKYVVFDEADRLFEMGFATELTEILHALPPSRQTLLFSATLPSSLVEFARAGLQEPSLVRLDAETKVSPDLESAFFAVKGGEKEGALLHLLHDVIKVPLGPPEGTKEESDELQARKRKREYRPNPKEKPTEYSTIIFTATKHHVEYIANLLKLAGFAVSYVYGSLDQTARLIQVDNFRRGRTHILVVTDVAARGIDMPALANVINYDFPSQPKIFVHRVGRTARAGQRGWAYGLVRQSDVPYLLDLQLFLGRKLIIGHDQKNPSFAADVVVGTLKRDGVDVNIEWVEKALKESADLKALKGVAAKAEKLYMKTRNSASSQSAKRAREVTQSRGWTQLHPLFGEEAAEAQAARDDLLSRINRFKPQETIFELGPKGKSSRNKAAEVVRNMRSRFKERKTTNDEDDEDVDMEDAEGKPDGEETNAFEDFEDEEEEGEAEEAEEAEAKEDPYADDSDSEMEVTVSSSMHTKKKGGPVNFQDPEIFMSYTPRTTSLAEEKAYGVHSGGYSGNSFVEAARDATMDLTNDESAKNFGLPTKSKMRWDKRHSKYVAVANDEDGSKGAKMIRGESGVKIAASFKSGRFDRWRKDNRLGKLPTIGETEKSQLIRNFGAQPGQPRYKHKMEKAPKDADKFRDDYHVRKKRVAEAKEKRIGKYKDGEGSKRELKTATDIRKARAVAEKKREKNARPAKRQKR.

A disordered region spans residues 21–43 (LFNNDSDFEDNSSKHHTKKGAVT). The Q motif motif lies at 99–127 (GGFQAMGLNAHLLRAITRKGFSVPTPIQR). In terms of domain architecture, Helicase ATP-binding spans 130–302 (IPLILERKDV…RAGLQEPSLV (173 aa)). 143-150 (ARTGSGKT) serves as a coordination point for ATP. Residues 250 to 253 (DEAD) carry the DEAD box motif. 3 disordered regions span residues 343-370 (GPPE…NPKE), 613-722 (ELGP…FQDP), and 851-934 (GAQP…RQKR). A Helicase C-terminal domain is found at 359-513 (KRKREYRPNP…KNPSFAADVV (155 aa)). Acidic residues-rich tracts occupy residues 644-654 (DEDDEDVDMED) and 662-700 (EETN…DSEM). Over residues 864 to 926 (EKAPKDADKF…VAEKKREKNA (63 aa)) the composition is skewed to basic and acidic residues.

It belongs to the DEAD box helicase family. DDX54/DBP10 subfamily.

It is found in the nucleus. The protein localises to the nucleolus. It catalyses the reaction ATP + H2O = ADP + phosphate + H(+). In terms of biological role, ATP-binding RNA helicase involved in the biogenesis of 60S ribosomal subunits and is required for the normal formation of 25S and 5.8S rRNAs. The protein is ATP-dependent RNA helicase dbp-10 (dbp-10) of Neurospora crassa (strain ATCC 24698 / 74-OR23-1A / CBS 708.71 / DSM 1257 / FGSC 987).